Reading from the N-terminus, the 49-residue chain is Large ribosomal subunit protein bL33B (49 aa).

Belongs to the bacterial ribosomal protein bL33 family.

The chain is Large ribosomal subunit protein bL33B from Exiguobacterium sibiricum (strain DSM 17290 / CCUG 55495 / CIP 109462 / JCM 13490 / 255-15).